The sequence spans 1470 residues: Isonitrile lipopeptide synthase (1470 aa).

A disordered region spans residues 584-603; that stretch reads PEPESQEAARPTAPAPTAPA. The Carrier domain maps to 974 to 1049; sequence AHDSTLERTI…ELARFLKQQE (76 aa). The residue at position 1009 (S1009) is an O-(pantetheine 4'-phosphoryl)serine. Residues 1049-1059 show a composition bias toward low complexity; it reads EQQAHAQVQPR. The disordered stretch occupies residues 1049–1070; that stretch reads EQQAHAQVQPRPAGPGLPPTLL.

This sequence belongs to the ATP-dependent AMP-binding enzyme family. Requires pantetheine 4'-phosphate as cofactor.

It carries out the reaction 2 a (3R)-3-isocyanyl-fatty acyl-[ACP] + L-lysine + ATP + 2 NADPH = an isonitrile lipopeptide + 2 holo-[ACP] + AMP + diphosphate + 2 NADP(+). It catalyses the reaction 2 (3R)-3-isocyanylbutanoyl-[ACP] + L-lysine + ATP + 2 NADPH = (2S)-2,6-bis[(3R)-3-isocyanobutanamido]hexan-1-ol + 2 holo-[ACP] + AMP + diphosphate + 2 NADP(+). Its function is as follows. Nonribosomal peptide synthetase (NRPS) involved in the biosynthesis of a unique class of isonitrile lipopeptides (INLPs). Catalyzes the final step in the pathway, i.e. the condensation of a (3R)-3-isocyanyl-fatty acyl-[ACP] to both amino groups of a lysine, producing isonitrile lipopeptides. Can use (3R)-3-isocyanylbutanoyl-[ACP] as substrate, leading to (2S)-2,6-bis[(3R)-3-isocyanobutanamido]hexan-1-ol. The protein is Isonitrile lipopeptide synthase of Streptomyces coeruleorubidus.